We begin with the raw amino-acid sequence, 351 residues long: Beta-1,4-xylosyltransferase IRX9 (351 aa).

Over 1–16 (MGSLERSKKKAQVWKK) the chain is Cytoplasmic. A helical; Signal-anchor for type II membrane protein membrane pass occupies residues 17–36 (AVIHFSLCFVMGFFTGFAPA). Over 37-351 (GKASFFSNFE…KFPTRTRLST (315 aa)) the chain is Lumenal. 2 N-linked (GlcNAc...) asparagine glycosylation sites follow: N64 and N74. Residues 80-107 (SQSQAPAPAESREAEGETRSLSEKEDEN) are disordered. Basic and acidic residues predominate over residues 89 to 107 (ESREAEGETRSLSEKEDEN). Residues N271 and N287 are each glycosylated (N-linked (GlcNAc...) asparagine).

Belongs to the glycosyltransferase 43 family. As to expression, expressed in developing interfascicular fibers, primary and secondary xylem in stems and developing secondary xylem in roots.

It is found in the golgi apparatus membrane. It catalyses the reaction [(1-&gt;4)-beta-D-xylan](n) + UDP-alpha-D-xylose = [(1-&gt;4)-beta-D-xylan](n+1) + UDP + H(+). Functionally, involved in the synthesis of the hemicellulose glucuronoxylan, a major component of secondary cell walls. Xylan xylosyltransferase that acts cooperatively with IRX14 to achieve the successive addition of xylosyl residues during xylan backbone elongation. The sequence is that of Beta-1,4-xylosyltransferase IRX9 from Arabidopsis thaliana (Mouse-ear cress).